A 296-amino-acid chain; its full sequence is Pantothenate synthetase (296 aa).

Residue 30–37 coordinates ATP; the sequence is MGNLHEGH. H37 serves as the catalytic Proton donor. Q61 contacts (R)-pantoate. Position 61 (Q61) interacts with beta-alanine. 149–152 lines the ATP pocket; it reads GEKD. Residue Q155 coordinates (R)-pantoate. Residues V178 and 186-189 each bind ATP; that span reads MSSR.

The protein belongs to the pantothenate synthetase family. Homodimer.

It localises to the cytoplasm. It carries out the reaction (R)-pantoate + beta-alanine + ATP = (R)-pantothenate + AMP + diphosphate + H(+). It functions in the pathway cofactor biosynthesis; (R)-pantothenate biosynthesis; (R)-pantothenate from (R)-pantoate and beta-alanine: step 1/1. Catalyzes the condensation of pantoate with beta-alanine in an ATP-dependent reaction via a pantoyl-adenylate intermediate. The chain is Pantothenate synthetase from Vibrio atlanticus (strain LGP32) (Vibrio splendidus (strain Mel32)).